The following is a 359-amino-acid chain: NF-kappa-B inhibitor beta (359 aa).

Phosphoserine; by RPS6KA1 is present on residues serine 19 and serine 23. ANK repeat units lie at residues 57–86, 93–122, 126–155, 206–235, 240–269, and 273–302; these read DGDT…GTEY, LGQT…GVLV, GGHT…SHPR, DGHT…DLNK, CGRT…DPTA, and GGRT…PEPE. The interval 153–192 is disordered; sequence HPRDASDTYLTQSQDHTPDTSHAPVATDPQPNPGNEEELR. Residues 298–308 are compositionally biased toward basic and acidic residues; that stretch reads APEPEDKDDKL. The tract at residues 298–359 is disordered; that stretch reads APEPEDKDDK…KPLPDDPNPA (62 aa). A Phosphoserine modification is found at serine 318. The segment covering 318–331 has biased composition (acidic residues); it reads SDSDNRDEGDEYDD. The segment covering 342-359 has biased composition (pro residues); that stretch reads QPPPSPAAKPLPDDPNPA.

It belongs to the NF-kappa-B inhibitor family. In terms of assembly, interacts with THRB (via ligand-binding domain). Interacts with RELA and REL. Interacts with COMMD1. Interacts with inhibitor kappa B-interacting Ras-like NKIRAS1 and NKIRAS2. Phosphorylated by RPS6KA1; followed by degradation. Interaction with NKIRAS1 and NKIRAS2 probably prevents phosphorylation.

The protein resides in the cytoplasm. It is found in the nucleus. Inhibits NF-kappa-B by complexing with and trapping it in the cytoplasm. However, the unphosphorylated form resynthesized after cell stimulation is able to bind NF-kappa-B allowing its transport to the nucleus and protecting it to further NFKBIA-dependent inactivation. Association with inhibitor kappa B-interacting NKIRAS1 and NKIRAS2 prevent its phosphorylation rendering it more resistant to degradation, explaining its slower degradation. This is NF-kappa-B inhibitor beta (Nfkbib) from Rattus norvegicus (Rat).